The following is a 141-amino-acid chain: Hemoglobin subunit alpha (141 aa).

The Globin domain maps to 1–141; it reads VLSANDKSNV…VSTVLTSKYR (141 aa). Residue serine 3 is modified to Phosphoserine. N6-succinyllysine is present on residues lysine 7 and lysine 11. An N6-acetyllysine; alternate modification is found at lysine 16. Lysine 16 bears the N6-succinyllysine; alternate mark. Tyrosine 24 is modified (phosphotyrosine). Serine 35 carries the phosphoserine modification. At lysine 40 the chain carries N6-succinyllysine. Position 49 is a phosphoserine (serine 49). Histidine 58 is a binding site for O2. Residue histidine 87 coordinates heme b. Serine 102 carries the phosphoserine modification. Phosphothreonine is present on threonine 108. Phosphoserine is present on serine 124. Phosphothreonine is present on residues threonine 134 and threonine 137. Phosphoserine is present on serine 138.

Belongs to the globin family. As to quaternary structure, heterotetramer of two alpha chains and two beta chains. Red blood cells.

Its function is as follows. Involved in oxygen transport from the lung to the various peripheral tissues. Hemopressin acts as an antagonist peptide of the cannabinoid receptor CNR1. Hemopressin-binding efficiently blocks cannabinoid receptor CNR1 and subsequent signaling. This chain is Hemoglobin subunit alpha (HBA), found in Hippopotamus amphibius (Hippopotamus).